The chain runs to 118 residues: DNA-binding protein inhibitor ID-3 (118 aa).

In terms of domain architecture, bHLH spans 32-84 (SHKGPGVDEPMGLLYDMNGCYSKLKELVPGIPQGSKLSQVEILQHVIDYIFDL).

As to quaternary structure, homodimer. Heterodimer with other HLH proteins. Interacts (via HLH domain) with the bHLH protein hes4/hairy2 (via Orange domain). Interacts with stat3.

Its subcellular location is the nucleus. Transcriptional regulator (lacking a basic DNA binding domain) which negatively regulates the basic helix-loop-helix (bHLH) transcription factors by forming heterodimers and inhibiting their DNA binding and transcriptional activity. Influences cell fate decisions in the embryo by sequestering and blocking the activity of the bHLH transcription factors that control these decisions. Inhibits the binding of myogenic bHLH-containing complexes to E-box DNA, thereby preventing activation of muscle-specific target genes. Also inhibits the activity of neurogenic factor neurod1/neuroD. Plays a role in cell cycle progression and survival of neural crest progenitors; binding to either hes4-B/hairy2b or stat3 blocks the formation of transcription factor complexes and the repressor function of hes4-B/hairy2B, to allow neural crest progenitors to differentiate. May play a role in the regulation of the circadian rhythm. The protein is DNA-binding protein inhibitor ID-3 (id3) of Xenopus tropicalis (Western clawed frog).